A 428-amino-acid chain; its full sequence is Gamma-glutamyl phosphate reductase (428 aa).

It belongs to the gamma-glutamyl phosphate reductase family.

Its subcellular location is the cytoplasm. It carries out the reaction L-glutamate 5-semialdehyde + phosphate + NADP(+) = L-glutamyl 5-phosphate + NADPH + H(+). It functions in the pathway amino-acid biosynthesis; L-proline biosynthesis; L-glutamate 5-semialdehyde from L-glutamate: step 2/2. Its function is as follows. Catalyzes the NADPH-dependent reduction of L-glutamate 5-phosphate into L-glutamate 5-semialdehyde and phosphate. The product spontaneously undergoes cyclization to form 1-pyrroline-5-carboxylate. The chain is Gamma-glutamyl phosphate reductase from Zymomonas mobilis subsp. mobilis (strain ATCC 31821 / ZM4 / CP4).